The chain runs to 217 residues: uncharacterized protein (217 aa).

4 helical membrane-spanning segments follow: residues 9–29 (ISLASSVVATTVLVAPVLSTI), 54–74 (FLSTIIGAGYPIYKTYLLLEL), 103–125 (LMAYWCVYGCVTAAESILGRFLS), and 135–157 (IVFWLWLLNPRTQGAAFIYASYI).

The protein belongs to the DP1 family.

Its subcellular location is the endoplasmic reticulum membrane. This is an uncharacterized protein from Schizosaccharomyces pombe (strain 972 / ATCC 24843) (Fission yeast).